A 689-amino-acid polypeptide reads, in one-letter code: Methionine--tRNA ligase (689 aa).

The 'HIGH' region signature appears at 13–23 (PYANGNFHIGH). Zn(2+) is bound by residues Cys144, Cys147, Cys157, and Cys160. The 'KMSKS' region motif lies at 341-345 (KMSKS). Residue Lys344 coordinates ATP. One can recognise a tRNA-binding domain in the interval 583 to 689 (DFAKVDLRIA…PGASPGLRVR (107 aa)).

Belongs to the class-I aminoacyl-tRNA synthetase family. MetG type 1 subfamily. As to quaternary structure, homodimer. Zn(2+) serves as cofactor.

The protein resides in the cytoplasm. It carries out the reaction tRNA(Met) + L-methionine + ATP = L-methionyl-tRNA(Met) + AMP + diphosphate. Is required not only for elongation of protein synthesis but also for the initiation of all mRNA translation through initiator tRNA(fMet) aminoacylation. This is Methionine--tRNA ligase from Polaromonas sp. (strain JS666 / ATCC BAA-500).